The chain runs to 323 residues: Olfactory receptor 2AE1 (323 aa).

Topologically, residues 1 to 25 (MWQKNQTSLADFILEGLFDDSLTHL) are extracellular. A glycan (N-linked (GlcNAc...) asparagine) is linked at asparagine 5. Residues 26-49 (FLFSLTMVVFLIAVSGNTLTILLI) traverse the membrane as a helical segment. Topologically, residues 50 to 57 (CIDPQLHT) are cytoplasmic. Residues 58–79 (PMYFLLSQLSLMDLMHVSTIIL) traverse the membrane as a helical segment. At 80–100 (KMATNYLSGKKSISFVGCATQ) the chain is on the extracellular side. A disulfide bond links cysteine 97 and cysteine 189. The chain crosses the membrane as a helical span at residues 101–120 (HFLYLCLGGAECFLLAVMSY). Topologically, residues 121-139 (DRYVAICHPLRYAVLMNKK) are cytoplasmic. Residues 140–158 (VGLMMAVMSWLGASVNSLI) form a helical membrane-spanning segment. The Extracellular segment spans residues 159–195 (HMAILMHFPFCGPRKVYHFYCEFPAVVKLVCGDITVY). The helical transmembrane segment at 196-218 (ETTVYISSILLLLPIFLISTSYV) threads the bilayer. The Cytoplasmic portion of the chain corresponds to 219-235 (FILQSVIQMRSSGSKRN). A helical membrane pass occupies residues 236 to 258 (AFATCGSHLTVVSLWFGACIFSY). Residues 259-271 (MRPRSQCTLLQNK) are Extracellular-facing. Residues 272 to 291 (VGSVFYSIITPTLNSLIYTL) form a helical membrane-spanning segment. At 292–323 (RNKDVAKALRRVLRRDVITQCIQRLQLWLPRV) the chain is on the cytoplasmic side.

This sequence belongs to the G-protein coupled receptor 1 family.

The protein resides in the cell membrane. Functionally, odorant receptor. The protein is Olfactory receptor 2AE1 (OR2AE1) of Homo sapiens (Human).